A 222-amino-acid chain; its full sequence is ATP-dependent dethiobiotin synthetase BioD (222 aa).

12–17 is an ATP binding site; sequence DVGKTF. Thr16 is a binding site for Mg(2+). Lys37 is a catalytic residue. Ser41 contributes to the substrate binding site. Residues Asp54 and 113–116 contribute to the ATP site; that span reads EGAG. Mg(2+)-binding residues include Asp54 and Glu113.

The protein belongs to the dethiobiotin synthetase family. Homodimer. It depends on Mg(2+) as a cofactor.

The protein resides in the cytoplasm. It catalyses the reaction (7R,8S)-7,8-diammoniononanoate + CO2 + ATP = (4R,5S)-dethiobiotin + ADP + phosphate + 3 H(+). It functions in the pathway cofactor biosynthesis; biotin biosynthesis; biotin from 7,8-diaminononanoate: step 1/2. Catalyzes a mechanistically unusual reaction, the ATP-dependent insertion of CO2 between the N7 and N8 nitrogen atoms of 7,8-diaminopelargonic acid (DAPA, also called 7,8-diammoniononanoate) to form a ureido ring. This Anoxybacillus flavithermus (strain DSM 21510 / WK1) protein is ATP-dependent dethiobiotin synthetase BioD.